We begin with the raw amino-acid sequence, 435 residues long: Probable protein arginine N-methyltransferase 6 (435 aa).

A disordered region spans residues 1–48 (MQSGGDFSNGFHGDHHRELELEDKQGPSLSSFGRAKKRSHAGARDPRG). Positions 12–25 (HGDHHRELELEDKQ) are enriched in basic and acidic residues. An SAM-dependent MTase PRMT-type domain is found at 80 to 418 (DVAYFHSYAH…KENKRFMNIH (339 aa)). S-adenosyl-L-methionine-binding residues include histidine 93, arginine 102, glycine 126, aspartate 148, and glutamate 177. Residues glutamate 191 and glutamate 200 contribute to the active site. Residues 333–377 (PAKNTSETSIASGSSSISPSGEVNQKKRTNPSDALVLSTSPESPP) are disordered. The segment covering 337–354 (TSETSIASGSSSISPSGE) has biased composition (low complexity).

Belongs to the class I-like SAM-binding methyltransferase superfamily. Protein arginine N-methyltransferase family. PRMT6 subfamily.

Functionally, arginine methyltransferase that can both catalyze the formation of omega-N monomethylarginine (MMA) and asymmetrical dimethylarginine (aDMA). The protein is Probable protein arginine N-methyltransferase 6 (PRMT6) of Arabidopsis thaliana (Mouse-ear cress).